A 96-amino-acid polypeptide reads, in one-letter code: Small ribosomal subunit protein bS6 (96 aa).

Belongs to the bacterial ribosomal protein bS6 family.

Functionally, binds together with bS18 to 16S ribosomal RNA. The polypeptide is Small ribosomal subunit protein bS6 (Bacillus mycoides (strain KBAB4) (Bacillus weihenstephanensis)).